Consider the following 292-residue polypeptide: Ribose import binding protein RbsB (292 aa).

The signal sequence occupies residues Met1 to Ala23.

Belongs to the bacterial solute-binding protein 2 family. As to quaternary structure, the complex is composed of an ATP-binding protein (RbsA), two transmembrane proteins (RbsC) and a solute-binding protein (RbsB).

Its subcellular location is the periplasm. Its function is as follows. Part of the ABC transporter complex RbsABC involved in ribose import. Binds ribose. In Haemophilus influenzae (strain ATCC 51907 / DSM 11121 / KW20 / Rd), this protein is Ribose import binding protein RbsB (rbsB).